The primary structure comprises 593 residues: Aspartate--tRNA(Asp/Asn) ligase (593 aa).

Glu-172 provides a ligand contact to L-aspartate. Positions 196-199 are aspartate; sequence QLFK. Arg-218 provides a ligand contact to L-aspartate. ATP is bound by residues 218 to 220 and Gln-227; that span reads RDE. His-450 contributes to the L-aspartate binding site. Glu-484 contacts ATP. Residue Arg-491 coordinates L-aspartate. Position 536–539 (536–539) interacts with ATP; it reads GLDR.

This sequence belongs to the class-II aminoacyl-tRNA synthetase family. Type 1 subfamily. Homodimer.

It is found in the cytoplasm. It carries out the reaction tRNA(Asx) + L-aspartate + ATP = L-aspartyl-tRNA(Asx) + AMP + diphosphate. Its function is as follows. Aspartyl-tRNA synthetase with relaxed tRNA specificity since it is able to aspartylate not only its cognate tRNA(Asp) but also tRNA(Asn). Reaction proceeds in two steps: L-aspartate is first activated by ATP to form Asp-AMP and then transferred to the acceptor end of tRNA(Asp/Asn). This is Aspartate--tRNA(Asp/Asn) ligase from Nitrosomonas europaea (strain ATCC 19718 / CIP 103999 / KCTC 2705 / NBRC 14298).